Reading from the N-terminus, the 258-residue chain is Venom plasminogen activator LV-PA (258 aa).

A signal peptide spans 1 to 18; it reads MVLITVLANLLILQLSYA. Residues 19–24 constitute a propeptide that is removed on maturation; the sequence is QKSSKL. Residues 25–249 form the Peptidase S1 domain; it reads VFGGDECNIN…YTDWIQSIIA (225 aa). N-linked (GlcNAc...) asparagine glycosylation is present at asparagine 44. A disulfide bridge connects residues cysteine 50 and cysteine 66. Residues histidine 65 and aspartate 110 each act as charge relay system in the active site. Intrachain disulfides connect cysteine 142-cysteine 210, cysteine 174-cysteine 189, and cysteine 200-cysteine 225. The Charge relay system role is filled by serine 204.

Belongs to the peptidase S1 family. Snake venom subfamily. Monomer. In terms of processing, N-glycosylated. PubMed:17034951 shows that it contains approximately 10% carbohydrates, PubMed:10871053 shows that it contains approximately 20% carbohydrates. In terms of tissue distribution, expressed by the venom gland.

The protein localises to the secreted. Its activity is regulated as follows. Inhibited by the serine protease inhibitors NPGB, PMSF, p-aminobenzamidine and aprotinin. Not inhibited by soybean trypsin inhibitor or EDTA. Functionally, snake venom serine protease that activates plasminogen. Weakly hydrolyzes the alpha chain of human fibrinogen without releasing fibrinopeptide A. Does not hydrolyze plasma kallikrein or factor Xa. Does not clot fibrinogen. Does not affect platelet function. Induces hypotensive effects on rats. Shows a preferential cleavage at Lys-|-Xaa over Arg-|-Xaa bonds. The protein is Venom plasminogen activator LV-PA of Lachesis muta muta (Bushmaster).